Reading from the N-terminus, the 173-residue chain is Crossover junction endodeoxyribonuclease RuvC (173 aa).

Catalysis depends on residues Asp8, Glu67, and Asp139. Asp8, Glu67, and Asp139 together coordinate Mg(2+).

Belongs to the RuvC family. In terms of assembly, homodimer which binds Holliday junction (HJ) DNA. The HJ becomes 2-fold symmetrical on binding to RuvC with unstacked arms; it has a different conformation from HJ DNA in complex with RuvA. In the full resolvosome a probable DNA-RuvA(4)-RuvB(12)-RuvC(2) complex forms which resolves the HJ. Requires Mg(2+) as cofactor.

Its subcellular location is the cytoplasm. The enzyme catalyses Endonucleolytic cleavage at a junction such as a reciprocal single-stranded crossover between two homologous DNA duplexes (Holliday junction).. The RuvA-RuvB-RuvC complex processes Holliday junction (HJ) DNA during genetic recombination and DNA repair. Endonuclease that resolves HJ intermediates. Cleaves cruciform DNA by making single-stranded nicks across the HJ at symmetrical positions within the homologous arms, yielding a 5'-phosphate and a 3'-hydroxyl group; requires a central core of homology in the junction. The consensus cleavage sequence is 5'-(A/T)TT(C/G)-3'. Cleavage occurs on the 3'-side of the TT dinucleotide at the point of strand exchange. HJ branch migration catalyzed by RuvA-RuvB allows RuvC to scan DNA until it finds its consensus sequence, where it cleaves and resolves the cruciform DNA. This chain is Crossover junction endodeoxyribonuclease RuvC, found in Cronobacter sakazakii (strain ATCC BAA-894) (Enterobacter sakazakii).